A 129-amino-acid chain; its full sequence is Histone H3 (129 aa).

The disordered stretch occupies residues 1–36; the sequence is MSRTKETARAKRTITSKKSKKAPSGASGVKRSHRRW. Positions 10–21 are enriched in basic residues; that stretch reads AKRTITSKKSKK.

It belongs to the histone H3 family. As to quaternary structure, the nucleosome is a histone octamer containing two molecules each of H2A, H2B, H3 and H4 assembled in one H3-H4 heterotetramer and two H2A-H2B heterodimers. The octamer wraps approximately 147 bp of DNA.

The protein resides in the nucleus. It is found in the chromosome. Its function is as follows. Core component of nucleosome. Nucleosomes wrap and compact DNA into chromatin, limiting DNA accessibility to the cellular machineries which require DNA as a template. Histones thereby play a central role in transcription regulation, DNA repair, DNA replication and chromosomal stability. DNA accessibility is regulated via a complex set of post-translational modifications of histones, also called histone code, and nucleosome remodeling. The protein is Histone H3 of Leishmania infantum.